The sequence spans 641 residues: uncharacterized protein (641 aa).

The residue at position 112 (Ser-112) is a Phosphoserine. 4 disordered regions span residues 118–243 (STSI…LDPT), 261–289 (KSPR…TVSI), 355–386 (DKSD…RLEA), and 404–430 (DGEG…QSHS). The segment covering 132–162 (ASVSSQYPHRTFQKQVNKTCVSKSDGPSGNG) has biased composition (polar residues). The residue at position 198 (Ser-198) is a Phosphoserine. Polar residues-rich tracts occupy residues 222–234 (NQEL…SRSN) and 278–289 (RQASSAGDTVSI). Residues 355–368 (DKSDGDQREEDCVR) show a composition bias toward basic and acidic residues. 2 stretches are compositionally biased toward low complexity: residues 374 to 383 (RSSSPTSPTR) and 421 to 430 (SSSAAVQSHS).

This is an uncharacterized protein from Mus musculus (Mouse).